The chain runs to 140 residues: Acyl carrier protein 1, chloroplastic (140 aa).

Residues 1 to 56 (MASAAAGASICIKSASFSPLAPGRISSLRSVSLPVSRKSFPSLKSSKSSFALRVSC) constitute a chloroplast transit peptide. A Carrier domain is found at 60–135 (PETVAKVCGI…DAADLIEKLM (76 aa)). O-(pantetheine 4'-phosphoryl)serine is present on Ser95.

The protein belongs to the acyl carrier protein (ACP) family. In terms of processing, 4'-phosphopantetheine is transferred from CoA to a specific serine of apo-ACP by acpS. This modification is essential for activity because fatty acids are bound in thioester linkage to the sulfhydryl of the prosthetic group.

The protein resides in the plastid. The protein localises to the chloroplast. It functions in the pathway lipid metabolism; fatty acid biosynthesis. Carrier of the growing fatty acid chain in fatty acid biosynthesis. The sequence is that of Acyl carrier protein 1, chloroplastic (ACL1.1) from Cuphea lanceolata (Cigar flower).